We begin with the raw amino-acid sequence, 161 residues long: Ribonuclease H (161 aa).

The 144-residue stretch at 12–155 folds into the RNase H type-1 domain; it reads QPQHVVIYTD…ADALANKGVE (144 aa). Residues D21, E59, D81, and D147 each contribute to the Mg(2+) site.

Belongs to the RNase H family. Monomer. Mg(2+) is required as a cofactor.

Its subcellular location is the cytoplasm. It carries out the reaction Endonucleolytic cleavage to 5'-phosphomonoester.. In terms of biological role, endonuclease that specifically degrades the RNA of RNA-DNA hybrids. The sequence is that of Ribonuclease H from Polaromonas naphthalenivorans (strain CJ2).